A 224-amino-acid chain; its full sequence is Propanediol dehydratase medium subunit (224 aa).

Residues 1 to 18 (MEINEKLLRQIIEDVLSE) form a targets protein to the BMC region.

This sequence belongs to the diol/glycerol dehydratase medium subunit family. As to quaternary structure, the propanediol dehydratase enzyme is a heterotrimeric complex composed of a large (PduC), a medium (PduD) and a small (PduE) subunit. It depends on adenosylcob(III)alamin as a cofactor.

The protein localises to the bacterial microcompartment. It catalyses the reaction propane-1,2-diol = propanal + H2O. It functions in the pathway polyol metabolism; 1,2-propanediol degradation. Its function is as follows. Part of the PduCDE complex that catalyzes the dehydration of 1,2-propanediol (1,2-PD) to propionaldehyde. This subunit is directly targeted to the bacterial microcompartment (BMC). In terms of biological role, expression of a cosmid containing the full 21-gene pdu operon in E.coli allows E.coli to grow on 1,2-propanediol (1,2-PD) with the appearance of BMCs in its cytoplasm. Functionally, the 1,2-PD-specific bacterial microcompartment (BMC) concentrates low levels of 1,2-PD catabolic enzymes, concentrates volatile reaction intermediates thus enhancing pathway flux and keeps the level of toxic, mutagenic propionaldehyde low. This Citrobacter freundii protein is Propanediol dehydratase medium subunit.